The sequence spans 129 residues: Small ribosomal subunit protein uS8c (129 aa).

This sequence belongs to the universal ribosomal protein uS8 family. As to quaternary structure, part of the 30S ribosomal subunit.

The protein localises to the plastid. Its subcellular location is the chloroplast. In terms of biological role, one of the primary rRNA binding proteins, it binds directly to 16S rRNA central domain where it helps coordinate assembly of the platform of the 30S subunit. In Nephroselmis olivacea (Green alga), this protein is Small ribosomal subunit protein uS8c (rps8).